Reading from the N-terminus, the 1263-residue chain is Valine--tRNA ligase (1263 aa).

Residue Ser2 is modified to N-acetylserine. Residues 89-219 (GSRAAVLVQQ…YSGARSVTQQ (131 aa)) form the GST C-terminal domain. A disordered region spans residues 218–294 (QQPGSEVIAP…PGEKKDVSGA (77 aa)). Basic and acidic residues-rich tracts occupy residues 234–248 (LKKE…EKFQ) and 259–274 (HGEK…KRDP). The short motif at 343 to 353 (PNVTGSLHLGH) is the 'HIGH' region element. Phosphoserine is present on residues Ser436 and Ser526. Lys644 is modified (N6-acetyllysine). Positions 861–865 (KMSKS) match the 'KMSKS' region motif. Lys864 contributes to the ATP binding site.

This sequence belongs to the class-I aminoacyl-tRNA synthetase family. Forms high-molecular-mass aggregates with elongation factor 1.

The catalysed reaction is tRNA(Val) + L-valine + ATP = L-valyl-tRNA(Val) + AMP + diphosphate. Its activity is regulated as follows. Can be regulated by protein kinase C-dependent phosphorylation. The sequence is that of Valine--tRNA ligase (Vars1) from Mus musculus (Mouse).